Reading from the N-terminus, the 391-residue chain is Histamine H4 receptor (391 aa).

The Extracellular segment spans residues 1-19 (MSESNGTDVLPLTAQVPLA). Asparagine 5 carries an N-linked (GlcNAc...) asparagine glycan. Residues 20–40 (FLMSLLAFAITIGNAVVILAF) traverse the membrane as a helical segment. Over 41–52 (VADRNLRHRSNY) the chain is Cytoplasmic. Residues 53–73 (FFLNLAISDFFVGVISIPLYI) form a helical membrane-spanning segment. Topologically, residues 74 to 87 (PHTLFNWNFGSGIC) are extracellular. A disulfide bridge links cysteine 87 with cysteine 166. The chain crosses the membrane as a helical span at residues 88–108 (MFWLITDYLLCTASVYSIVLI). Over 109–131 (SYDRYQSVSNAVRYRAQHTGILK) the chain is Cytoplasmic. Residues 132–152 (IVAQMVAVWILAFLVNGPMIL) form a helical membrane-spanning segment. Residues 153–174 (ASDSWKNSTNTEECEPGFVTEW) are Extracellular-facing. Residue asparagine 159 is glycosylated (N-linked (GlcNAc...) asparagine). The helical transmembrane segment at 175 to 195 (YILAITAFLEFLLPVSLVVYF) threads the bilayer. Residues 196-306 (SVQIYWSLWK…LLRGRKLARS (111 aa)) are Cytoplasmic-facing. Residues 307-327 (LAVLLSAFAICWAPYCLFTIV) form a helical membrane-spanning segment. Topologically, residues 328 to 343 (LSTYRRGERPKSIWYS) are extracellular. A helical transmembrane segment spans residues 344–364 (IAFWLQWFNSLINPFLYPLCH). The Cytoplasmic portion of the chain corresponds to 365–391 (RRFQKAFWKILCVTKQPAPSQTQSVSS).

It belongs to the G-protein coupled receptor 1 family. As to quaternary structure, interacts with TSPAN4.

It localises to the cell membrane. Functionally, the H4 subclass of histamine receptors could mediate the histamine signals in peripheral tissues. Displays a significant level of constitutive activity (spontaneous activity in the absence of agonist). The sequence is that of Histamine H4 receptor (Hrh4) from Rattus norvegicus (Rat).